Reading from the N-terminus, the 629-residue chain is tRNA uridine 5-carboxymethylaminomethyl modification enzyme MnmG (629 aa).

Gly13–Gly18 contributes to the FAD binding site. Gly273 to Phe287 is an NAD(+) binding site.

It belongs to the MnmG family. Homodimer. Heterotetramer of two MnmE and two MnmG subunits. FAD serves as cofactor.

The protein resides in the cytoplasm. Functionally, NAD-binding protein involved in the addition of a carboxymethylaminomethyl (cmnm) group at the wobble position (U34) of certain tRNAs, forming tRNA-cmnm(5)s(2)U34. In Tolumonas auensis (strain DSM 9187 / NBRC 110442 / TA 4), this protein is tRNA uridine 5-carboxymethylaminomethyl modification enzyme MnmG.